The following is a 116-amino-acid chain: Chondroitin proteoglycan 7 (116 aa).

Positions 1–19 (MQTITILALIACVAVPIFA) are cleaved as a signal peptide. Residues 29 to 102 (DVVESSGEGS…NAVVASDSPK (74 aa)) are disordered. 2 stretches are compositionally biased toward low complexity: residues 32–41 (ESSGEGSGES) and 48–58 (VESSGEGSGES). O-linked (Xyl...) (chondroitin sulfate) serine glycans are attached at residues Ser-68, Ser-72, Ser-76, Ser-84, and Ser-88.

The sequence is that of Chondroitin proteoglycan 7 from Caenorhabditis elegans.